Reading from the N-terminus, the 61-residue chain is Putative antitoxin VapB21 (61 aa).

It belongs to the UPF0165 family.

In terms of biological role, possibly the antitoxin component of a type II toxin-antitoxin (TA) system. Its cognate toxin is VapC21 (Potential). This Archaeoglobus fulgidus (strain ATCC 49558 / DSM 4304 / JCM 9628 / NBRC 100126 / VC-16) protein is Putative antitoxin VapB21 (vapB21).